Consider the following 267-residue polypeptide: tRNA pseudouridine synthase A (267 aa).

Asp53 acts as the Nucleophile in catalysis. A substrate-binding site is contributed by Tyr111.

It belongs to the tRNA pseudouridine synthase TruA family. As to quaternary structure, homodimer.

It carries out the reaction uridine(38/39/40) in tRNA = pseudouridine(38/39/40) in tRNA. In terms of biological role, formation of pseudouridine at positions 38, 39 and 40 in the anticodon stem and loop of transfer RNAs. This chain is tRNA pseudouridine synthase A, found in Alcanivorax borkumensis (strain ATCC 700651 / DSM 11573 / NCIMB 13689 / SK2).